The sequence spans 302 residues: Nucleotide-binding protein Bcenmc03_2806 (302 aa).

An ATP-binding site is contributed by 8–15; that stretch reads GISGSGKS. GTP is bound at residue 57 to 60; that stretch reads DARS.

This sequence belongs to the RapZ-like family.

Functionally, displays ATPase and GTPase activities. The chain is Nucleotide-binding protein Bcenmc03_2806 from Burkholderia orbicola (strain MC0-3).